A 154-amino-acid polypeptide reads, in one-letter code: MHPAHLLVLLAVCVSLLGAARIPPLPLSLLNFANLIECANHGTRSALAYADYGCYCGKGGRGTPLDDLDRCCHVHDDCYGEAEKLPACNYLMSSPYFNSYSYKCNEGKVTCTDDNDECKAFICNCDRTAAICFAGATYNDENFMISKKRNDICQ.

The signal sequence occupies residues 1–27 (MHPAHLLVLLAVCVSLLGAARIPPLPL). 7 disulfide bridges follow: Cys-38-Cys-104, Cys-54-Cys-153, Cys-56-Cys-72, Cys-71-Cys-132, Cys-78-Cys-125, Cys-88-Cys-118, and Cys-111-Cys-123. Ca(2+) is bound by residues Gly-57 and Gly-59. His-75 is a catalytic residue. Residue Asp-76 coordinates Ca(2+). Asp-126 is a catalytic residue.

It belongs to the phospholipase A2 family. Group I subfamily. D49 sub-subfamily. In terms of assembly, monomer. Requires Ca(2+) as cofactor. As to expression, expressed by the venom gland.

The protein resides in the secreted. It carries out the reaction a 1,2-diacyl-sn-glycero-3-phosphocholine + H2O = a 1-acyl-sn-glycero-3-phosphocholine + a fatty acid + H(+). Functionally, snake venom phospholipase A2 (PLA2) that has a low specific activity on phospholipid substrates, and is neither neurotoxic, nor myotoxic. Induces endothelial cell migration which is mediated, at least in part, by its hydrolytic products. Shows antimalarial activity, but is not able to potently inhibit HIV-1 replication. Binds in a calcium-independent fashion with very high affinity to a muscle-type (M-type) PLA2 receptor, but is a very poor ligand for neuronal-type (N-type) receptors. PLA2 catalyzes the calcium-dependent hydrolysis of the 2-acyl groups in 3-sn-phosphoglycerides. In Oxyuranus scutellatus scutellatus (Australian taipan), this protein is Phospholipase A2 OS1.